An 890-amino-acid polypeptide reads, in one-letter code: Protein FAM171A1 (890 aa).

Residues 1-21 (MSRSAALLLCLLGCHVWKAVT) form the signal peptide. Over 22–303 (KTLREPGAGA…VTQDITTYHT (282 aa)) the chain is Extracellular. N-linked (GlcNAc...) asparagine glycosylation is found at Asn190 and Asn194. Residues 304–324 (VFLLAILGGMAFILLVLLCLL) traverse the membrane as a helical segment. The Cytoplasmic portion of the chain corresponds to 325–890 (LYYCRRKCMK…ERPLMAFNIK (566 aa)). Ser358, Ser360, Ser371, Ser422, Ser443, and Ser525 each carry phosphoserine. Disordered regions lie at residues 730–759 (AGRN…RGDA) and 818–890 (EGSS…FNIK). Residues 747-757 (NEPKSARKGRG) show a composition bias toward basic and acidic residues. Residues 822-833 (RRSGGQLPSLQE) show a composition bias toward polar residues. A phosphoserine mark is found at Ser849 and Ser855. The span at 858–869 (EEEEDDDDDDQG) shows a compositional bias: acidic residues. Positions 870–883 (EDKKSPWQKREERP) are enriched in basic and acidic residues.

This sequence belongs to the FAM171 family. In terms of assembly, interacts with ADAM10, NSG1 and OAZ1.

The protein localises to the cell membrane. Its function is as follows. Involved in the regulation of the cytoskeletal dynamics, plays a role in actin stress fiber formation. In Pongo abelii (Sumatran orangutan), this protein is Protein FAM171A1 (FAM171A1).